Reading from the N-terminus, the 351-residue chain is N-acetyl-gamma-glutamyl-phosphate reductase (351 aa).

Cys-154 is a catalytic residue.

It belongs to the NAGSA dehydrogenase family. Type 1 subfamily.

The protein localises to the cytoplasm. The enzyme catalyses N-acetyl-L-glutamate 5-semialdehyde + phosphate + NADP(+) = N-acetyl-L-glutamyl 5-phosphate + NADPH + H(+). It participates in amino-acid biosynthesis; L-arginine biosynthesis; N(2)-acetyl-L-ornithine from L-glutamate: step 3/4. Its function is as follows. Catalyzes the NADPH-dependent reduction of N-acetyl-5-glutamyl phosphate to yield N-acetyl-L-glutamate 5-semialdehyde. The protein is N-acetyl-gamma-glutamyl-phosphate reductase of Prochlorococcus marinus (strain MIT 9301).